The primary structure comprises 689 residues: DNA ligase (689 aa).

NAD(+) is bound by residues Asp40 to Asp44, Ser89 to Leu90, and Glu121. Catalysis depends on Lys123, which acts as the N6-AMP-lysine intermediate. 4 residues coordinate NAD(+): Arg144, Glu179, Lys295, and Lys319. The Zn(2+) site is built by Cys413, Cys416, Cys431, and Cys437. Positions Arg610–Ala689 constitute a BRCT domain.

Belongs to the NAD-dependent DNA ligase family. LigA subfamily. The cofactor is Mg(2+). Requires Mn(2+) as cofactor.

The enzyme catalyses NAD(+) + (deoxyribonucleotide)n-3'-hydroxyl + 5'-phospho-(deoxyribonucleotide)m = (deoxyribonucleotide)n+m + AMP + beta-nicotinamide D-nucleotide.. DNA ligase that catalyzes the formation of phosphodiester linkages between 5'-phosphoryl and 3'-hydroxyl groups in double-stranded DNA using NAD as a coenzyme and as the energy source for the reaction. It is essential for DNA replication and repair of damaged DNA. This chain is DNA ligase, found in Rickettsia akari (strain Hartford).